We begin with the raw amino-acid sequence, 219 residues long: Ribosomal RNA large subunit methyltransferase E (219 aa).

5 residues coordinate S-adenosyl-L-methionine: G60, W62, D85, D101, and D126. Residue K166 is the Proton acceptor of the active site.

It belongs to the class I-like SAM-binding methyltransferase superfamily. RNA methyltransferase RlmE family.

The protein resides in the cytoplasm. It carries out the reaction uridine(2552) in 23S rRNA + S-adenosyl-L-methionine = 2'-O-methyluridine(2552) in 23S rRNA + S-adenosyl-L-homocysteine + H(+). Functionally, specifically methylates the uridine in position 2552 of 23S rRNA at the 2'-O position of the ribose in the fully assembled 50S ribosomal subunit. This is Ribosomal RNA large subunit methyltransferase E from Bordetella avium (strain 197N).